A 413-amino-acid chain; its full sequence is Gamma-glutamyl phosphate reductase (413 aa).

This sequence belongs to the gamma-glutamyl phosphate reductase family.

It localises to the cytoplasm. The catalysed reaction is L-glutamate 5-semialdehyde + phosphate + NADP(+) = L-glutamyl 5-phosphate + NADPH + H(+). It participates in amino-acid biosynthesis; L-proline biosynthesis; L-glutamate 5-semialdehyde from L-glutamate: step 2/2. Catalyzes the NADPH-dependent reduction of L-glutamate 5-phosphate into L-glutamate 5-semialdehyde and phosphate. The product spontaneously undergoes cyclization to form 1-pyrroline-5-carboxylate. The chain is Gamma-glutamyl phosphate reductase from Alkaliphilus oremlandii (strain OhILAs) (Clostridium oremlandii (strain OhILAs)).